Reading from the N-terminus, the 374-residue chain is MMHLENTPTFHGFHMPAEWEPHSQCWIGWPERADNWRDGAVHAQLVFTRVAAAISRFEKVTVCASSAQWENARNQLPDHVRVVEISSNDSWFRDIGPTFVVRRETSKSDDAEHRIAGIDWTFNSWGGLEDGCYCDWSLDSLVKKKILDVERIPRFSHSMVLEGGSIHVDGEGTCITTEECLLNKNRNPHLSKSQIEDELKAYLGVRKVIWLPRGLYGDDDTNGHVDNMCCFVRPGAVLLSWTDDKTDPQYERSEEAYSLFSSVTDANGRKFEVIKLHVPGPLYMTEKEAAGVFQDDGAKPRLPGTRLAASYVNFYIANGAIIAPQFGDKKWDDEAIRVLSKTFPHHEVVGIEGSREIVLSGGNIHCITQQQPAI.

Positions 220 and 226 each coordinate agmatine. C366 functions as the Amidino-cysteine intermediate in the catalytic mechanism.

The protein belongs to the agmatine deiminase family. As to quaternary structure, forms homodimers.

It catalyses the reaction agmatine + H2O = N-carbamoylputrescine + NH4(+). Its pathway is amine and polyamine biosynthesis; putrescine biosynthesis via agmatine pathway; N-carbamoylputrescine from agmatine: step 1/1. Mediates the hydrolysis of agmatine into N-carbamoylputrescine in the arginine decarboxylase (ADC) pathway of putrescine biosynthesis, a basic polyamine. This Medicago truncatula (Barrel medic) protein is Agmatine deiminase.